The chain runs to 466 residues: Soluble pyridine nucleotide transhydrogenase (466 aa).

36 to 45 (EKESSVGGGC) provides a ligand contact to FAD.

This sequence belongs to the class-I pyridine nucleotide-disulfide oxidoreductase family. It depends on FAD as a cofactor.

Its subcellular location is the cytoplasm. The catalysed reaction is NAD(+) + NADPH = NADH + NADP(+). Functionally, conversion of NADPH, generated by peripheral catabolic pathways, to NADH, which can enter the respiratory chain for energy generation. The chain is Soluble pyridine nucleotide transhydrogenase from Vibrio atlanticus (strain LGP32) (Vibrio splendidus (strain Mel32)).